The sequence spans 371 residues: GPI mannosyltransferase 1 (371 aa).

A run of 8 helical transmembrane segments spans residues 64–84, 120–140, 144–164, 190–210, 248–268, 290–310, 318–338, and 344–364; these read FPSWGKYLFSISDLIAGWLMI, AILGILSIALLYLIEKKSVWL, ILGFSVHFKIYPFMYGIAFLV, IVVGSLFMFTICNLLMYYLYG, ASSLFAFLPQLSLCMLIPLVF, VCTSQYFMWYLVFLPLVLPNS, LICLSLWIIGQLLWLISAYNL, and SVFIPLWLSGLLFFFFNVYEL.

It belongs to the PIGM family.

It is found in the endoplasmic reticulum membrane. Its pathway is glycolipid biosynthesis; glycosylphosphatidylinositol-anchor biosynthesis. In terms of biological role, mannosyltransferase involved in glycosylphosphatidylinositol-anchor biosynthesis. Transfers the first alpha-1,4-mannose to GlcN-acyl-PI during GPI precursor assembly. Required for cell wall integrity. The sequence is that of GPI mannosyltransferase 1 (gpi14) from Schizosaccharomyces pombe (strain 972 / ATCC 24843) (Fission yeast).